A 459-amino-acid chain; its full sequence is Protein FAM90A27P (459 aa).

Residues 1–10 (MARHSVHHQA) show a composition bias toward basic residues. 4 disordered regions span residues 1-41 (MARH…ESRV), 74-136 (SHKE…WKEP), 153-239 (HTTK…ALQP), and 259-459 (PDAD…SDSD). Residues 125–136 (PQEKMQEAWKEP) are compositionally biased toward basic and acidic residues. The segment covering 184–194 (HNDSPQLSTCG) has biased composition (polar residues). The span at 341–353 (KATAETAATKTAT) shows a compositional bias: low complexity. A compositionally biased stretch (polar residues) spans 415-427 (PPENSASAQSPRF).

This sequence belongs to the FAM90 family.

The sequence is that of Protein FAM90A27P (FAM90A27P) from Homo sapiens (Human).